A 339-amino-acid chain; its full sequence is DNA-directed RNA polymerase subunit alpha (339 aa).

The segment at 1–235 is alpha N-terminal domain (alpha-NTD); it reads MTIQKNWQEL…DQLNVFVNFE (235 aa). The interval 251 to 339 is alpha C-terminal domain (alpha-CTD); sequence FNPAFLKKVD…ELAKRFEDHY (89 aa).

It belongs to the RNA polymerase alpha chain family. Homodimer. The RNAP catalytic core consists of 2 alpha, 1 beta, 1 beta' and 1 omega subunit. When a sigma factor is associated with the core the holoenzyme is formed, which can initiate transcription.

The catalysed reaction is RNA(n) + a ribonucleoside 5'-triphosphate = RNA(n+1) + diphosphate. Its function is as follows. DNA-dependent RNA polymerase catalyzes the transcription of DNA into RNA using the four ribonucleoside triphosphates as substrates. This chain is DNA-directed RNA polymerase subunit alpha, found in Rhodopseudomonas palustris (strain ATCC BAA-98 / CGA009).